A 560-amino-acid polypeptide reads, in one-letter code: ATP synthase subunit beta, mitochondrial (560 aa).

The transit peptide at 1–54 (MASRRLLASLLRQSAQRGGGLISRSLGNSIPKSASRASSRASPKGFLLNRAVQY) directs the protein to the mitochondrion. Disordered regions lie at residues 20 to 44 (GLIS…ASPK) and 58 to 81 (AAAP…KITD). 2 stretches are compositionally biased toward low complexity: residues 33–42 (SASRASSRAS) and 58–71 (AAAP…PPKS). 235 to 242 (GGAGVGKT) lines the ATP pocket.

It belongs to the ATPase alpha/beta chains family. F-type ATPases have 2 components, CF(1) - the catalytic core - and CF(0) - the membrane proton channel. CF(1) has five subunits: alpha(3), beta(3), gamma(1), delta(1), epsilon(1). CF(0) has three main subunits: a, b and c.

It localises to the mitochondrion. The protein resides in the mitochondrion inner membrane. The enzyme catalyses ATP + H2O + 4 H(+)(in) = ADP + phosphate + 5 H(+)(out). Its function is as follows. Mitochondrial membrane ATP synthase (F(1)F(0) ATP synthase or Complex V) produces ATP from ADP in the presence of a proton gradient across the membrane which is generated by electron transport complexes of the respiratory chain. F-type ATPases consist of two structural domains, F(1) - containing the extramembraneous catalytic core, and F(0) - containing the membrane proton channel, linked together by a central stalk and a peripheral stalk. During catalysis, ATP synthesis in the catalytic domain of F(1) is coupled via a rotary mechanism of the central stalk subunits to proton translocation. Subunits alpha and beta form the catalytic core in F(1). Rotation of the central stalk against the surrounding alpha(3)beta(3) subunits leads to hydrolysis of ATP in three separate catalytic sites on the beta subunits. This Nicotiana plumbaginifolia (Leadwort-leaved tobacco) protein is ATP synthase subunit beta, mitochondrial (ATPB).